The sequence spans 319 residues: Beta-ketoacyl-[acyl-carrier-protein] synthase III (319 aa).

Active-site residues include cysteine 115 and histidine 246. Residues 247-251 (QANLR) are ACP-binding. Asparagine 276 is a catalytic residue.

The protein belongs to the thiolase-like superfamily. FabH family. In terms of assembly, homodimer.

The protein resides in the cytoplasm. The enzyme catalyses malonyl-[ACP] + acetyl-CoA + H(+) = 3-oxobutanoyl-[ACP] + CO2 + CoA. It participates in lipid metabolism; fatty acid biosynthesis. In terms of biological role, catalyzes the condensation reaction of fatty acid synthesis by the addition to an acyl acceptor of two carbons from malonyl-ACP. Catalyzes the first condensation reaction which initiates fatty acid synthesis and may therefore play a role in governing the total rate of fatty acid production. Possesses both acetoacetyl-ACP synthase and acetyl transacylase activities. Its substrate specificity determines the biosynthesis of branched-chain and/or straight-chain of fatty acids. The polypeptide is Beta-ketoacyl-[acyl-carrier-protein] synthase III (Coxiella burnetii (strain CbuK_Q154) (Coxiella burnetii (strain Q154))).